Here is a 274-residue protein sequence, read N- to C-terminus: NAD(P)H dehydrogenase [quinone] 1 (274 aa).

Residues His12, 18–19 (FN), and Gln67 each bind FAD. Ser82 carries the post-translational modification Phosphoserine. An FAD-binding site is contributed by 104 to 107 (LQWF). 126-128 (AYT) is a binding site for substrate. FAD contacts are provided by residues 148–151 (TTGG), Tyr156, and Arg201. The segment at 225–274 (PSSLFDLNFQAGFLMKKEVQDEEKNKKFGLSVGHHLGKSIPTDNQIKARK) is important for apoenzyme conformational stability. Glycyl lysine isopeptide (Lys-Gly) (interchain with G-Cter in SUMO2) cross-links involve residues Lys250 and Lys251.

This sequence belongs to the NAD(P)H dehydrogenase (quinone) family. Homodimer. Interacts with PDLIM4 isoform 2; this interaction stabilizes PDLIM4 isoform 2 in response to oxidative stress and protects it from ubiquitin-independent degradation by the core 20S proteasome. Interacts with TP73 (via SAM domain); this interaction is NADH-dependent, stabilizes TP73 in response to oxidative stress and protects it from ubiquitin-independent degradation by the 20S proteasome. Interacts with TP53; this interaction is NADH-dependent, stabilizes TP53 in response to oxidative stress and protects it from ubiquitin-independent degradation by the 20S proteasome. FAD serves as cofactor.

Its subcellular location is the cytoplasm. The protein localises to the cytosol. The catalysed reaction is a quinone + NADH + H(+) = a quinol + NAD(+). The enzyme catalyses a quinone + NADPH + H(+) = a quinol + NADP(+). It carries out the reaction ubiquinone-10 + NADH + H(+) = ubiquinol-10 + NAD(+). It catalyses the reaction menadione + NADH + H(+) = menadiol + NAD(+). Flavin-containing quinone reductase that catalyzes two-electron reduction of quinones to hydroquinones using either NADH or NADPH as electron donors. In a ping-pong kinetic mechanism, the electrons are sequentially transferred from NAD(P)H to flavin cofactor and then from reduced flavin to the quinone, bypassing the formation of semiquinone and reactive oxygen species. Regulates cellular redox state primarily through quinone detoxification. Reduces components of plasma membrane redox system such as coenzyme Q and vitamin quinones, producing antioxidant hydroquinone forms. In the process may function as superoxide scavenger to prevent hydroquinone oxidation and facilitate excretion. Alternatively, can activate quinones and their derivatives by generating redox reactive hydroquinones with DNA cross-linking antitumor potential. Acts as a gatekeeper of the core 20S proteasome known to degrade proteins with unstructured regions. Upon oxidative stress, interacts with tumor suppressors TP53 and TP73 in a NADH-dependent way and inhibits their ubiquitin-independent degradation by the 20S proteasome. This is NAD(P)H dehydrogenase [quinone] 1 (NQO1) from Pongo abelii (Sumatran orangutan).